We begin with the raw amino-acid sequence, 262 residues long: Acyl-[acyl-carrier-protein]--UDP-N-acetylglucosamine O-acyltransferase (262 aa).

This sequence belongs to the transferase hexapeptide repeat family. LpxA subfamily. Homotrimer.

The protein resides in the cytoplasm. It carries out the reaction a (3R)-hydroxyacyl-[ACP] + UDP-N-acetyl-alpha-D-glucosamine = a UDP-3-O-[(3R)-3-hydroxyacyl]-N-acetyl-alpha-D-glucosamine + holo-[ACP]. The protein operates within glycolipid biosynthesis; lipid IV(A) biosynthesis; lipid IV(A) from (3R)-3-hydroxytetradecanoyl-[acyl-carrier-protein] and UDP-N-acetyl-alpha-D-glucosamine: step 1/6. In terms of biological role, involved in the biosynthesis of lipid A, a phosphorylated glycolipid that anchors the lipopolysaccharide to the outer membrane of the cell. This Psychromonas ingrahamii (strain DSM 17664 / CCUG 51855 / 37) protein is Acyl-[acyl-carrier-protein]--UDP-N-acetylglucosamine O-acyltransferase.